The following is a 160-amino-acid chain: Putative 4-hydroxy-4-methyl-2-oxoglutarate aldolase (160 aa).

Residues 78 to 81 (GDVI) and R100 contribute to the substrate site. D101 serves as a coordination point for a divalent metal cation.

This sequence belongs to the class II aldolase/RraA-like family. As to quaternary structure, homotrimer. Requires a divalent metal cation as cofactor.

The enzyme catalyses 4-hydroxy-4-methyl-2-oxoglutarate = 2 pyruvate. It catalyses the reaction oxaloacetate + H(+) = pyruvate + CO2. In terms of biological role, catalyzes the aldol cleavage of 4-hydroxy-4-methyl-2-oxoglutarate (HMG) into 2 molecules of pyruvate. Also contains a secondary oxaloacetate (OAA) decarboxylase activity due to the common pyruvate enolate transition state formed following C-C bond cleavage in the retro-aldol and decarboxylation reactions. The polypeptide is Putative 4-hydroxy-4-methyl-2-oxoglutarate aldolase (Mycolicibacterium vanbaalenii (strain DSM 7251 / JCM 13017 / BCRC 16820 / KCTC 9966 / NRRL B-24157 / PYR-1) (Mycobacterium vanbaalenii)).